Reading from the N-terminus, the 489-residue chain is Major aspartyl peptidase 1 (489 aa).

An N-terminal signal peptide occupies residues 1-16 (MHYLAVALPLLTLALA). Residues 101-432 (YAGQVSIGTP…RYNPAAIGFA (332 aa)) form the Peptidase A1 domain. D119 is an active-site residue. A pepstatin A-binding site is contributed by G121. A disulfide bridge connects residues C132 and C137. T161, G163, and S164 together coordinate pepstatin A. N266 is a glycosylation site (N-linked (GlcNAc...) asparagine). Position 286 (Y286) interacts with pepstatin A. D317 is a catalytic residue. Positions 320 and 321 each coordinate pepstatin A. A disulfide bond links C357 and C391. Positions 442–466 (AGNPSSSTTGGGTSGSNGGGSSSGA) are disordered. A compositionally biased stretch (gly residues) spans 450–463 (TGGGTSGSNGGGSS). Residues 456–489 (GSNGGGSSSGAMERKGVQLGWLVGAVAVGVAAMI) constitute a propeptide, removed at pH 5.0; by autocatalysis.

It belongs to the peptidase A1 family. Monomer. In terms of processing, activated by the autocatalytic cleavage of the propeptide. Cleaved at the end of the propeptide promiscuously from residue 76 to residue 79. C-terminal cleavage by autocatalysis at Gly-456 at the pH optimum indicating a possible regulatory or other function of this propeptide.

It localises to the secreted. Its activity is regulated as follows. Activated by low pH. Inhibited by pepstatin A with an IC(50) of 1.4 nM. Inhibited by acetyl pepstatin. Inhibited by HIV antiretroviral therapy protease inhibitors including amprenavir and ritonavir. Inhibited by HIV-1 protease inhibitor brecanavir with an approximate IC(50) of 352 nM. Inhibited by HIV-1 protease inhibitors CGP53437 and GS-8374. From the tested peptidomimetic inhibitor molecules, macrocycles containing P2-P3' tethered side chains, statines in P1 and an alpha amino acid in P2' are the best. From the linear peptidomimetic inhibitors, the ones with a phenylstatine or hydroxyethylamine scissile bond isoster are better than compounds with a reduced bond or a homo-amide. Overall, inhibitors with a phenylalanine side chain, either unsubstituted or with a small substituent, is preferred in P1 while a bulkier P1 side chain leads to lower inhibition. Functionally, possesses prevalent extracellular endopeptidase activity at low pH condition. Required for high-density growth in acidic environments. Broad substrate specificity with preference cleavage of the peptide substrate between hydrophobic amino acids. Cleaves substrate at P1-P1' between Phe-Leu. Positively charged amino acids are preferred at P2. Prefers hydrophobic amino acids at the P3 and P4 positions. Cleaves substrate also at P1'-P2' between Leu-Val to some degree. Required for virulence in mouse inhalation model of infection. This is Major aspartyl peptidase 1 from Cryptococcus neoformans var. grubii serotype A (strain H99 / ATCC 208821 / CBS 10515 / FGSC 9487) (Filobasidiella neoformans var. grubii).